The following is a 352-amino-acid chain: Pejvakin (352 aa).

It belongs to the gasdermin family. In terms of assembly, interacts with MAP1LC3B; interaction is direct. Interacts with IQGAP1. Interacts with ROCK2. Interacts with TRIOBP.

It is found in the peroxisome membrane. The protein resides in the cell projection. Its subcellular location is the cilium. Peroxisome-associated protein required to protect auditory hair cells against noise-induced damage. Acts by regulating noise-induced peroxisome proliferation in auditory hair cells and neurons, and promoting autophagic degradation of damaged peroxisomes (pexophagy). Noise overexposure increases reactive oxygen species (ROS) levels, causing oxidative damage to auditory hair cells and resulting in hearing loss. PJVK acts as a ROS sensor that recruits the autophagy machinery to trigger pexophagy of peroxisomes damaged by oxidative stress. In addition to pexophagy, also required to promote peroxisome proliferation in response to sound overstimulation. This Homo sapiens (Human) protein is Pejvakin.